Reading from the N-terminus, the 889-residue chain is Alanine--tRNA ligase (889 aa).

Zn(2+) contacts are provided by H564, H568, C671, and H675.

This sequence belongs to the class-II aminoacyl-tRNA synthetase family. Zn(2+) is required as a cofactor.

The protein localises to the cytoplasm. It catalyses the reaction tRNA(Ala) + L-alanine + ATP = L-alanyl-tRNA(Ala) + AMP + diphosphate. Its function is as follows. Catalyzes the attachment of alanine to tRNA(Ala) in a two-step reaction: alanine is first activated by ATP to form Ala-AMP and then transferred to the acceptor end of tRNA(Ala). Also edits incorrectly charged Ser-tRNA(Ala) and Gly-tRNA(Ala) via its editing domain. The protein is Alanine--tRNA ligase of Pelagibacter ubique (strain HTCC1062).